Here is a 427-residue protein sequence, read N- to C-terminus: Peptidyl-prolyl cis-trans isomerase sig-7 (427 aa).

Positions Glu6 to Val161 constitute a PPIase cyclophilin-type domain. The stretch at Asp195–Met227 forms a coiled coil. The RRM domain occupies Asn241–Ser319. Residues Gln322–Glu334 show a composition bias toward polar residues. The disordered stretch occupies residues Gln322 to Arg427. The span at Ser351–Lys370 shows a compositional bias: basic residues. Positions Ser384 to Arg427 are enriched in basic and acidic residues.

Belongs to the cyclophilin-type PPIase family. PPIL4 subfamily. Interacts with ama-1, the catalytic subunit of the RNA polymerase II (RNA pol II) complex. Ubiquitous.

It localises to the nucleus. The protein localises to the nucleoplasm. Its subcellular location is the chromosome. It carries out the reaction [protein]-peptidylproline (omega=180) = [protein]-peptidylproline (omega=0). Its function is as follows. Probable PPIase that accelerates the folding of proteins. It catalyzes the cis-trans isomerization of proline imidic peptide bonds in oligopeptides. Involved in RNA polymerase II (RNA pol II)-mediated transcription elongation, and in primary transcript splicing, including co-transcriptional trans-splicing, in association with the catalytic subunit of the RNA pol II complex ama-1. Also plays a role in the regulation of elongation-dependent phosphorylation of ama-1 to control transcription. Involved in the transcription of several genes during embryogenesis and in particular, of genes related to developmental processes such as gastrulation, and also regulates transcription in germ cells from embryogenesis to adulthood. The sequence is that of Peptidyl-prolyl cis-trans isomerase sig-7 from Caenorhabditis elegans.